The following is a 911-amino-acid chain: Protein dead ringer (911 aa).

Disordered regions lie at residues methionine 1–serine 44, serine 67–histidine 87, and histidine 172–glycine 274. Over residues isoleucine 19–arginine 34 the composition is skewed to basic and acidic residues. Serine 30 carries the phosphoserine modification. Threonine 35 carries the phosphothreonine modification. The residue at position 44 (serine 44) is a Phosphoserine. Residues threonine 174–threonine 201 show a composition bias toward low complexity. Gly residues predominate over residues asparagine 202–glycine 231. The segment covering alanine 252–asparagine 273 has biased composition (low complexity). Residues aspartate 293–lysine 385 form the ARID domain. 3 disordered regions span residues glycine 501–glycine 633, proline 662–asparagine 775, and glutamine 826–methionine 877. A compositionally biased stretch (low complexity) spans histidine 512 to serine 550. Over residues histidine 570 to asparagine 600 the composition is skewed to polar residues. Serine 592 and serine 594 each carry phosphoserine. Basic and acidic residues predominate over residues isoleucine 601 to valine 621. Residue serine 720 is modified to Phosphoserine. The 95-residue stretch at threonine 731–serine 825 folds into the REKLES domain. Over residues glycine 737 to glycine 751 the composition is skewed to basic residues. Positions threonine 841–glutamate 853 are enriched in acidic residues. Residues proline 854–asparagine 870 are compositionally biased toward basic and acidic residues.

In terms of tissue distribution, present in the pharyngeal muscles, hindgut epithelium, amnioserosa, ring gland, midgut-hindgut junction, posterior region of each brain lobe, longitudinal glial cells of the CNS and the salivary gland duct of germ-band retracted embryos.

Its subcellular location is the nucleus. Transcription factor which is a downstream target of gcm and repo. Directly or indirectly activates the transcription of locos and pros, which are essential for the development of some glial cells. Plays an essential role in defining the cell shape and migration characteristics of longitudinal glia that enable them to establish a normal axon scaffold. The protein is Protein dead ringer (retn) of Drosophila melanogaster (Fruit fly).